The primary structure comprises 122 residues: Histone H2B (122 aa).

The interval M1–K31 is disordered. The residue at position 2 (P2) is a N,N-dimethylproline. Residue Q10 forms an Isoglutamyl lysine isopeptide (Gln-Lys) (interchain with K-5 in histone H4) linkage. An O-linked (GlcNAc) serine glycan is attached at S109. Residue K117 forms a Glycyl lysine isopeptide (Lys-Gly) (interchain with G-Cter in ubiquitin) linkage.

Belongs to the histone H2B family. In terms of assembly, the nucleosome is a histone octamer containing two molecules each of H2A, H2B, H3 and H4 assembled in one H3-H4 heterotetramer and two H2A-H2B heterodimers. The octamer wraps approximately 147 bp of DNA. Post-translationally, monoubiquitination of Lys-117 gives a specific tag for epigenetic transcriptional activation and is also prerequisite for histone H3 'Lys-4' and 'Lys-79' methylation. In terms of processing, glcNAcylation at Ser-109 promotes monoubiquitination of Lys-117. It fluctuates in response to extracellular glucose, and associates with transcribed genes.

The protein resides in the nucleus. It is found in the chromosome. Its function is as follows. Core component of nucleosome. Nucleosomes wrap and compact DNA into chromatin, limiting DNA accessibility to the cellular machineries which require DNA as a template. Histones thereby play a central role in transcription regulation, DNA repair, DNA replication and chromosomal stability. DNA accessibility is regulated via a complex set of post-translational modifications of histones, also called histone code, and nucleosome remodeling. This chain is Histone H2B, found in Patiria pectinifera (Starfish).